We begin with the raw amino-acid sequence, 167 residues long: I-Kappa-B like protein I1 (167 aa).

ANK repeat units follow at residues 54-86 (HGKQ…DING), 91-121 (FGNT…NMGI), and 125-154 (LFKT…QCRI).

It belongs to the polydnaviridae I-Kappa-B-like protein family.

Functionally, suppresses the host immune response through NF-kappa-B inactivation. Possesses ankyrin repeat domains required for NF-kappa-B binding but lacks the regulatory regions required for dissociation from NF-kappa-B and degradation. Therefore, prevents host NF-kappa-B release and subsequent activation. In Microplitis demolitor (Parasitoid wasp), this protein is I-Kappa-B like protein I1 (I1).